A 248-amino-acid polypeptide reads, in one-letter code: Ubiquinone/menaquinone biosynthesis C-methyltransferase UbiE (248 aa).

Residues threonine 71, aspartate 92, and aspartate 120–alanine 121 contribute to the S-adenosyl-L-methionine site.

Belongs to the class I-like SAM-binding methyltransferase superfamily. MenG/UbiE family.

The catalysed reaction is a 2-demethylmenaquinol + S-adenosyl-L-methionine = a menaquinol + S-adenosyl-L-homocysteine + H(+). It carries out the reaction a 2-methoxy-6-(all-trans-polyprenyl)benzene-1,4-diol + S-adenosyl-L-methionine = a 5-methoxy-2-methyl-3-(all-trans-polyprenyl)benzene-1,4-diol + S-adenosyl-L-homocysteine + H(+). It participates in quinol/quinone metabolism; menaquinone biosynthesis; menaquinol from 1,4-dihydroxy-2-naphthoate: step 2/2. It functions in the pathway cofactor biosynthesis; ubiquinone biosynthesis. In terms of biological role, methyltransferase required for the conversion of demethylmenaquinol (DMKH2) to menaquinol (MKH2) and the conversion of 2-polyprenyl-6-methoxy-1,4-benzoquinol (DDMQH2) to 2-polyprenyl-3-methyl-6-methoxy-1,4-benzoquinol (DMQH2). This Methylococcus capsulatus (strain ATCC 33009 / NCIMB 11132 / Bath) protein is Ubiquinone/menaquinone biosynthesis C-methyltransferase UbiE.